A 216-amino-acid chain; its full sequence is Adenylate kinase (216 aa).

An ATP-binding site is contributed by 10 to 15 (GAGKGT). The tract at residues 30-59 (STGDMFRAAMKAETEMGLQAKSFIDKGALV) is NMP. AMP-binding positions include Thr-31, Arg-36, 57–59 (ALV), 85–88 (GFPR), and Gln-92. The LID stretch occupies residues 126-163 (GRRICKECGATYHLEFNAPAKADVCDKCGGELYQRSDD). Arg-127 contacts ATP. Zn(2+) contacts are provided by Cys-130 and Cys-133. 136-137 (TY) provides a ligand contact to ATP. Cys-150 and Cys-153 together coordinate Zn(2+). AMP contacts are provided by Arg-160 and Arg-171. Gln-199 contacts ATP.

The protein belongs to the adenylate kinase family. As to quaternary structure, monomer.

Its subcellular location is the cytoplasm. It carries out the reaction AMP + ATP = 2 ADP. The protein operates within purine metabolism; AMP biosynthesis via salvage pathway; AMP from ADP: step 1/1. Functionally, catalyzes the reversible transfer of the terminal phosphate group between ATP and AMP. Plays an important role in cellular energy homeostasis and in adenine nucleotide metabolism. This Bacillus anthracis (strain A0248) protein is Adenylate kinase.